The chain runs to 176 residues: Protein MAL2 (176 aa).

The Cytoplasmic segment spans residues 1–34; it reads MSAGGASVPPPPNPAVSFPVPRVTLPAGPDILRT. Residues 31–175 form the MARVEL domain; it reads ILRTYSGAFV…SLGLALRRWR (145 aa). A helical membrane pass occupies residues 35–55; that stretch reads YSGAFVCLEILFGGLVWILVA. Topologically, residues 56-66 are lumenal; sequence SSNVPLPLLQG. The chain crosses the membrane as a helical span at residues 67–87; the sequence is WVMFVSVTAFFFSLLFLGLFL. Over 88 to 102 the chain is Cytoplasmic; it reads SGMVTQIDANWNFLD. The helical transmembrane segment at 103 to 123 threads the bilayer; the sequence is FAYHFTVFVFYFGAFLLEAAA. At 124–149 the chain is on the lumenal side; sequence TSLHDLHYNITMTGQPLLNDNQYNIN. An N-linked (GlcNAc...) asparagine glycan is attached at N132. A helical membrane pass occupies residues 150–170; that stretch reads VAASIFAFMTTACYGCSLGLA. The Cytoplasmic portion of the chain corresponds to 171–176; that stretch reads LRRWRP.

The protein belongs to the MAL family. In terms of assembly, interacts with TPD52L2.

It localises to the cell membrane. The protein localises to the apical cell membrane. Its function is as follows. Member of the machinery of polarized transport. Required for the indirect transcytotic route at the step of the egress of the transcytosing cargo from perinuclear endosomes in order for it to travel to the apical surface via a raft-dependent pathway. The chain is Protein MAL2 (MAL2) from Pongo abelii (Sumatran orangutan).